The sequence spans 542 residues: MSKDIKFSSDARTAMMRGIDILADTVKTTLGPKGRNVVLEKSYGSPLITNDGVTIAKEIELEDHFENMGAKLVSEVASKTNDIAGDGTTTATVLTQAIVREGLKNVTAGANPVGIRRGIELAAETAVASIKEMAIPVHDKSAIAQVATVSSRSEKVGEYISDAMERVGSDGVITIEESKGMQTELDVVEGMQFDRGYLSQYMVSNTEKMVAELDNPYILITDKKISNIQEILPLLEQILKTNRPLLIVADDVDGEALPTLVLNKIKGVFNVVAVKAPGFGDRRKAQLEDLAILTGGTVITEELGLDLKDATLEALGQAAKATVDKDHTTIVEGAGSADAISDRVAIIKAQIEKTTSDFDREKLQERLAKLAGGVAVVKVGAATETELKAMKLLIEDALNATRAAVEEGIVSGGGTALVNAIAALDKLSEEGDIQTGINIVRRALEEPVRQIAANAGYEGSVIIDKLRSEEVGTGFNAATGQWVNMIEEGIVDPAKVTRSALQNAASVAGLILTTEAVVANKPEPAAPAMPPMDPSMGMGGMM.

Residues 29–32 (TLGP), 86–90 (DGTTT), Gly-413, 476–478 (NAA), and Asp-492 each bind ATP.

It belongs to the chaperonin (HSP60) family. As to quaternary structure, forms a cylinder of 14 subunits composed of two heptameric rings stacked back-to-back. Interacts with the co-chaperonin GroES.

The protein localises to the cytoplasm. It catalyses the reaction ATP + H2O + a folded polypeptide = ADP + phosphate + an unfolded polypeptide.. In terms of biological role, together with its co-chaperonin GroES, plays an essential role in assisting protein folding. The GroEL-GroES system forms a nano-cage that allows encapsulation of the non-native substrate proteins and provides a physical environment optimized to promote and accelerate protein folding. This Lactococcus lactis subsp. lactis (strain IL1403) (Streptococcus lactis) protein is Chaperonin GroEL.